The following is a 58-amino-acid chain: Galectin-1 (58 aa).

The Galectin domain maps to 2–58 (GITXTSLHVAPGARLAVKGDIPAGAKSWVINLGKGENDIMLHFNARFDAHGDIRTIV). Residues 43–47 (HFNAR) and histidine 51 each bind a beta-D-galactoside.

In terms of assembly, monomer. In terms of tissue distribution, detected in most tissues, most abundantly in skin.

The protein resides in the secreted. The protein localises to the extracellular space. Its subcellular location is the extracellular matrix. Functionally, may regulate cell apoptosis and cell differentiation. Binds beta-galactoside and a wide array of complex carbohydrates. This Podarcis hispanicus (Iberian wall lizard) protein is Galectin-1.